The following is a 459-amino-acid chain: UDP-N-acetylglucosamine 1-carboxyvinyltransferase (459 aa).

40–41 (KN) lines the phosphoenolpyruvate pocket. UDP-N-acetyl-alpha-D-glucosamine is bound at residue R111. Residue C135 is the Proton donor of the active site. C135 is subject to 2-(S-cysteinyl)pyruvic acid O-phosphothioketal. Residues 140–144 (RPVDL), D324, and V346 each bind UDP-N-acetyl-alpha-D-glucosamine. The disordered stretch occupies residues 437–459 (PSAPPSEVSSAVAAGPDAAAAPV). Residues 441-459 (PSEVSSAVAAGPDAAAAPV) show a composition bias toward low complexity.

It belongs to the EPSP synthase family. MurA subfamily.

It localises to the cytoplasm. The catalysed reaction is phosphoenolpyruvate + UDP-N-acetyl-alpha-D-glucosamine = UDP-N-acetyl-3-O-(1-carboxyvinyl)-alpha-D-glucosamine + phosphate. Its pathway is cell wall biogenesis; peptidoglycan biosynthesis. Functionally, cell wall formation. Adds enolpyruvyl to UDP-N-acetylglucosamine. The sequence is that of UDP-N-acetylglucosamine 1-carboxyvinyltransferase from Gloeobacter violaceus (strain ATCC 29082 / PCC 7421).